The chain runs to 236 residues: Lipid A 4'-phosphatase (236 aa).

Transmembrane regions (helical) follow at residues 26–46 (FFYLISAKWTWVIMSIAFLFF), 58–78 (FIVGAVLLSVLICDQLSSSFF), 134–153 (YTWTIWSVVALVIYSRIYIG), 160–182 (IIPGIAVGLIVGHFVYKVYLYAR), and 200–220 (GDSIRLWTLSLIGFVFAMLCM).

Belongs to the lipid A LpxF 4'-phosphatase family.

The protein localises to the cell inner membrane. It functions in the pathway bacterial outer membrane biogenesis; LPS lipid A biosynthesis. Removes the 4'-phosphate group from lipid A species. Absence of phosphate groups in lipid A renders the bacteria resistant to host-derived cationic antimicrobial peptides (CAMP) and allows it to camouflage itself from the host innate immune response. Removal of the 4'-phosphate may be required to generate the substrate for deacylation of the pentaacyl lipid A to the tetraccylated lipid A species. This chain is Lipid A 4'-phosphatase, found in Porphyromonas gingivalis (strain ATCC 33277 / DSM 20709 / CIP 103683 / JCM 12257 / NCTC 11834 / 2561).